The primary structure comprises 346 residues: tRNA N6-adenosine threonylcarbamoyltransferase (346 aa).

Positions 117, 121, and 138 each coordinate a divalent metal cation. Residues 138–142, D170, G185, and N277 each bind substrate; that span reads YVSGG. D305 lines the a divalent metal cation pocket.

Belongs to the KAE1 / TsaD family. Component of the EKC/KEOPS complex composed of at least SPAP27G11.07c/BUD32, cgi121, gon7, pgp2 and SPAC4H3.13/PCC1; the whole complex dimerizes. Requires a divalent metal cation as cofactor.

The protein localises to the cytoplasm. It is found in the nucleus. The catalysed reaction is L-threonylcarbamoyladenylate + adenosine(37) in tRNA = N(6)-L-threonylcarbamoyladenosine(37) in tRNA + AMP + H(+). Its function is as follows. Component of the EKC/KEOPS complex that is required for the formation of a threonylcarbamoyl group on adenosine at position 37 (t(6)A37) in tRNAs that read codons beginning with adenine. The complex is probably involved in the transfer of the threonylcarbamoyl moiety of threonylcarbamoyl-AMP (TC-AMP) to the N6 group of A37. Pgp2 likely plays a direct catalytic role in this reaction, but requires other protein(s) of the complex to fulfill this activity. The EKC/KEOPS complex also promotes both telomere uncapping and telomere elongation. The complex is required for efficient recruitment of transcriptional coactivators. This chain is tRNA N6-adenosine threonylcarbamoyltransferase (pgp2), found in Schizosaccharomyces pombe (strain 972 / ATCC 24843) (Fission yeast).